We begin with the raw amino-acid sequence, 732 residues long: Catalase-peroxidase (732 aa).

The segment at 1-21 (MSMAEMRCPFSGHGAATTPAS) is disordered. Positions 1-22 (MSMAEMRCPFSGHGAATTPASA) are cleaved as a signal peptide. Positions 97-220 (WHSAGTYRLA…LAATEMGLIY (124 aa)) form a cross-link, tryptophyl-tyrosyl-methioninium (Trp-Tyr) (with M-246). The Proton acceptor role is filled by His-98. The tryptophyl-tyrosyl-methioninium (Tyr-Met) (with W-97) cross-link spans 220-246 (YVNPEGPHGEPDPVASGREVRDTFARM). Residue His-261 participates in heme b binding.

Belongs to the peroxidase family. Peroxidase/catalase subfamily. In terms of assembly, homodimer or homotetramer. It depends on heme b as a cofactor. In terms of processing, formation of the three residue Trp-Tyr-Met cross-link is important for the catalase, but not the peroxidase activity of the enzyme.

It catalyses the reaction H2O2 + AH2 = A + 2 H2O. The enzyme catalyses 2 H2O2 = O2 + 2 H2O. Its function is as follows. Bifunctional enzyme with both catalase and broad-spectrum peroxidase activity. This is Catalase-peroxidase from Synechococcus sp. (strain RCC307).